Consider the following 121-residue polypeptide: Cell division protein FtsB (121 aa).

At methionine 1–tryptophan 6 the chain is on the cytoplasmic side. A helical transmembrane segment spans residues leucine 7–phenylalanine 24. Residues glycine 25–proline 121 are Periplasmic-facing. Residues glutamate 31–glycine 66 adopt a coiled-coil conformation. Positions alanine 94–proline 121 are disordered. Residues serine 101–proline 121 show a composition bias toward low complexity.

This sequence belongs to the FtsB family. Part of a complex composed of FtsB, FtsL and FtsQ.

It is found in the cell inner membrane. Its function is as follows. Essential cell division protein. May link together the upstream cell division proteins, which are predominantly cytoplasmic, with the downstream cell division proteins, which are predominantly periplasmic. The chain is Cell division protein FtsB from Xanthomonas oryzae pv. oryzae (strain MAFF 311018).